A 628-amino-acid polypeptide reads, in one-letter code: tRNA uridine 5-carboxymethylaminomethyl modification enzyme MnmG (628 aa).

Residues 14–19, V126, and S181 contribute to the FAD site; that span reads GAGHAG. 273–287 provides a ligand contact to NAD(+); it reads GPRYCPSIEDKVVRF. Q370 provides a ligand contact to FAD.

Belongs to the MnmG family. Homodimer. Heterotetramer of two MnmE and two MnmG subunits. FAD serves as cofactor.

It is found in the cytoplasm. Functionally, NAD-binding protein involved in the addition of a carboxymethylaminomethyl (cmnm) group at the wobble position (U34) of certain tRNAs, forming tRNA-cmnm(5)s(2)U34. This is tRNA uridine 5-carboxymethylaminomethyl modification enzyme MnmG from Exiguobacterium sibiricum (strain DSM 17290 / CCUG 55495 / CIP 109462 / JCM 13490 / 255-15).